A 218-amino-acid polypeptide reads, in one-letter code: Monomethylamine corrinoid protein 2 (218 aa).

One can recognise a B12-binding N-terminal domain in the interval 1–91; that stretch reads MTNTEIFNKL…ELEKTKVEGE (91 aa). The B12-binding domain maps to 94–218; the sequence is TGLAITFVAE…AAKVALNVMK (125 aa). Histidine 107 contacts methylcob(III)alamin.

It belongs to the methylamine corrinoid protein family. Can form a complex with MtmB.

It participates in one-carbon metabolism; methanogenesis from methylamine. In terms of biological role, acts as a methyl group carrier between MtmB and MtbA. This is Monomethylamine corrinoid protein 2 (mtmC2) from Methanosarcina mazei (strain ATCC BAA-159 / DSM 3647 / Goe1 / Go1 / JCM 11833 / OCM 88) (Methanosarcina frisia).